The chain runs to 90 residues: Conotoxin Im6.2 (90 aa).

Positions 1-18 are cleaved as a signal peptide; sequence MKLTILLLVAALLVLTQA. A propeptide spanning residues 19–29 is cleaved from the precursor; it reads RTERRRVKSRK. 3 disulfides stabilise this stretch: Cys-61–Cys-75, Cys-68–Cys-79, and Cys-74–Cys-84. Position 89 is a glutamic acid 1-amide (Glu-89).

Belongs to the conotoxin O2 superfamily. Expressed by the venom duct.

The protein localises to the secreted. Probable neurotoxin. This is Conotoxin Im6.2 from Conus imperialis (Imperial cone).